Here is a 492-residue protein sequence, read N- to C-terminus: Octanoyltransferase (492 aa).

Residues 1–255 (MRCILLGSGT…GYDGLEAIID (255 aa)) form a unknown region. The interval 256-492 (EKGIRIKDFE…AVFRRNFGAL (237 aa)) is lipB domain. Residues 305–492 (RKPQNTLLFC…AVFRRNFGAL (188 aa)) enclose the BPL/LPL catalytic domain. Substrate contacts are provided by residues 350-357 (RGGDITYH), 423-425 (AIG), and 436-438 (GFA). Cys454 serves as the catalytic Acyl-thioester intermediate.

This sequence in the C-terminal section; belongs to the LipB family.

Its subcellular location is the cytoplasm. It catalyses the reaction octanoyl-[ACP] + L-lysyl-[protein] = N(6)-octanoyl-L-lysyl-[protein] + holo-[ACP] + H(+). It functions in the pathway protein modification; protein lipoylation via endogenous pathway; protein N(6)-(lipoyl)lysine from octanoyl-[acyl-carrier-protein]: step 1/2. In terms of biological role, catalyzes the transfer of endogenously produced octanoic acid from octanoyl-acyl-carrier-protein onto the lipoyl domains of lipoate-dependent enzymes. Lipoyl-ACP can also act as a substrate although octanoyl-ACP is likely to be the physiological substrate. The chain is Octanoyltransferase from Porphyromonas gingivalis (strain ATCC BAA-308 / W83).